A 139-amino-acid polypeptide reads, in one-letter code: MLSPRRTKFRKQQRGRMRGMAYRGSTINFGDYALQATEPCWITSRQIEAARRAMTRYIKRGGKIWIRIFPDKPVTMRPAETRMGSGKGSPEYWVAVVKPGRIMFELDGVSEPIAREAMRLAAQKLPIKTKFITKAEEYI.

The protein belongs to the universal ribosomal protein uL16 family. As to quaternary structure, part of the 50S ribosomal subunit.

Functionally, binds 23S rRNA and is also seen to make contacts with the A and possibly P site tRNAs. In Rippkaea orientalis (strain PCC 8801 / RF-1) (Cyanothece sp. (strain PCC 8801)), this protein is Large ribosomal subunit protein uL16.